Here is a 452-residue protein sequence, read N- to C-terminus: Pup--protein ligase (452 aa).

Glu9 serves as a coordination point for Mg(2+). Arg53 contacts ATP. Tyr55 contributes to the Mg(2+) binding site. Asp57 serves as the catalytic Proton acceptor. Glu63 lines the Mg(2+) pocket. Residues Thr66 and Trp419 each contribute to the ATP site.

Belongs to the Pup ligase/Pup deamidase family. Pup-conjugating enzyme subfamily.

It carries out the reaction ATP + [prokaryotic ubiquitin-like protein]-L-glutamate + [protein]-L-lysine = ADP + phosphate + N(6)-([prokaryotic ubiquitin-like protein]-gamma-L-glutamyl)-[protein]-L-lysine.. It functions in the pathway protein degradation; proteasomal Pup-dependent pathway. The protein operates within protein modification; protein pupylation. Catalyzes the covalent attachment of the prokaryotic ubiquitin-like protein modifier Pup to the proteasomal substrate proteins, thereby targeting them for proteasomal degradation. This tagging system is termed pupylation. The ligation reaction involves the side-chain carboxylate of the C-terminal glutamate of Pup and the side-chain amino group of a substrate lysine. The polypeptide is Pup--protein ligase (Mycobacteroides abscessus (strain ATCC 19977 / DSM 44196 / CCUG 20993 / CIP 104536 / JCM 13569 / NCTC 13031 / TMC 1543 / L948) (Mycobacterium abscessus)).